Consider the following 89-residue polypeptide: Small ribosomal subunit protein uS14 (89 aa).

This sequence belongs to the universal ribosomal protein uS14 family. As to quaternary structure, part of the 30S ribosomal subunit. Contacts proteins S3 and S10.

Functionally, binds 16S rRNA, required for the assembly of 30S particles and may also be responsible for determining the conformation of the 16S rRNA at the A site. This Flavobacterium psychrophilum (strain ATCC 49511 / DSM 21280 / CIP 103535 / JIP02/86) protein is Small ribosomal subunit protein uS14.